We begin with the raw amino-acid sequence, 119 residues long: Protein yippee-like 3 (119 aa).

Positions 19–116 (RRYSCVHCRA…IELSHMIKDN (98 aa)) constitute a Yippee domain. Cys23, Cys26, Cys79, and Cys82 together coordinate Zn(2+).

It belongs to the yippee family.

It is found in the nucleus. It localises to the nucleolus. In terms of biological role, may be involved in proliferation and apoptosis in myeloid precursor cells. The protein is Protein yippee-like 3 (ypel3) of Oryzias latipes (Japanese rice fish).